The sequence spans 554 residues: Undecaprenyl phosphate-alpha-4-amino-4-deoxy-L-arabinose arabinosyl transferase (554 aa).

11 helical membrane passes run 4 to 24, 87 to 107, 115 to 135, 178 to 198, 206 to 226, 262 to 282, 293 to 313, 315 to 335, 351 to 371, 384 to 404, and 414 to 434; these read LKDS…LLPV, FGSI…ATLL, VLAT…TYAV, FMTK…PIVI, LVVF…PWAL, YLPI…GALF, ELFF…VAKG, LPTY…AYAT, VINL…GLGL, QKVW…FITL, and AAAC…QQVV.

It belongs to the glycosyltransferase 83 family.

It localises to the cell inner membrane. It catalyses the reaction 4-amino-4-deoxy-alpha-L-arabinopyranosyl di-trans,octa-cis-undecaprenyl phosphate + lipid IVA = lipid IIA + di-trans,octa-cis-undecaprenyl phosphate.. It participates in lipopolysaccharide metabolism; 4-amino-4-deoxy-beta-L-arabinose-lipid A biosynthesis. In terms of biological role, catalyzes the transfer of the L-Ara4N moiety of the glycolipid undecaprenyl phosphate-alpha-L-Ara4N to lipid A. The modified arabinose is attached to lipid A and is required for resistance to polymyxin and cationic antimicrobial peptides. The chain is Undecaprenyl phosphate-alpha-4-amino-4-deoxy-L-arabinose arabinosyl transferase from Yersinia pseudotuberculosis serotype O:3 (strain YPIII).